The chain runs to 517 residues: Tyrosine 3-monooxygenase (517 aa).

Phosphoserine; by PKA is present on S33. Fe cation contacts are provided by H345, H350, and E390.

This sequence belongs to the biopterin-dependent aromatic amino acid hydroxylase family. Fe(2+) serves as cofactor.

It localises to the cytoplasm. The protein resides in the perinuclear region. It is found in the cell projection. The protein localises to the axon. The catalysed reaction is (6R)-L-erythro-5,6,7,8-tetrahydrobiopterin + L-tyrosine + O2 = (4aS,6R)-4a-hydroxy-L-erythro-5,6,7,8-tetrahydrobiopterin + L-dopa. The protein operates within catecholamine biosynthesis; dopamine biosynthesis; dopamine from L-tyrosine: step 1/2. Its activity is regulated as follows. Phosphorylation leads to an increase in the catalytic activity. Involved in the synthesis of catecholamines, such as dopamine. Has a role in serotonin signaling. Required for normal explorative and foraging behavior. The protein is Tyrosine 3-monooxygenase (cat-2) of Caenorhabditis briggsae.